A 327-amino-acid polypeptide reads, in one-letter code: Cobalamin biosynthesis protein CobD (327 aa).

Transmembrane regions (helical) follow at residues 60-80, 82-102, 159-179, and 304-324; these read GMWLTIGLVMACVVLGLVLEL, LPFAGTAGAVAEILIVTVLLA, DGIVAPAFWFLVGGLPGLFAY, and LFWSTMSLMTGLVIAASLIGL.

Belongs to the CobD/CbiB family.

It localises to the cell membrane. It participates in cofactor biosynthesis; adenosylcobalamin biosynthesis. Its function is as follows. Converts cobyric acid to cobinamide by the addition of aminopropanol on the F carboxylic group. In Brucella anthropi (strain ATCC 49188 / DSM 6882 / CCUG 24695 / JCM 21032 / LMG 3331 / NBRC 15819 / NCTC 12168 / Alc 37) (Ochrobactrum anthropi), this protein is Cobalamin biosynthesis protein CobD.